We begin with the raw amino-acid sequence, 183 residues long: Hypoxanthine/guanine phosphoribosyltransferase (183 aa).

This sequence belongs to the purine/pyrimidine phosphoribosyltransferase family. Archaeal HPRT subfamily. In terms of assembly, homodimer.

It localises to the cytoplasm. It catalyses the reaction IMP + diphosphate = hypoxanthine + 5-phospho-alpha-D-ribose 1-diphosphate. The enzyme catalyses GMP + diphosphate = guanine + 5-phospho-alpha-D-ribose 1-diphosphate. It participates in purine metabolism; IMP biosynthesis via salvage pathway; IMP from hypoxanthine: step 1/1. In terms of biological role, catalyzes a salvage reaction resulting in the formation of IMP that is energically less costly than de novo synthesis. In Methanocaldococcus jannaschii (strain ATCC 43067 / DSM 2661 / JAL-1 / JCM 10045 / NBRC 100440) (Methanococcus jannaschii), this protein is Hypoxanthine/guanine phosphoribosyltransferase.